We begin with the raw amino-acid sequence, 411 residues long: Signal-transducing adaptor protein 2 (411 aa).

Positions His20–Arg120 constitute a PH domain. Position 22 is a phosphotyrosine (Tyr22). The 97-residue stretch at Trp152–Glu248 folds into the SH2 domain. Position 250 is a phosphotyrosine; by PTK6 (Tyr250). Residues Val291–Thr320 form a disordered region. Residues Tyr318 and Tyr330 each carry the phosphotyrosine modification. Residues Ser338–Lys364 form a disordered region. Residues Thr390–Glu410 are a coiled coil.

Interacts with PTK6 and CSF1R. In terms of processing, phosphorylated on tyrosine. Phosphorylated by PTK6 at Tyr-250 modulates PTK6-mediated STAT3 activation. Widely expressed.

The protein localises to the cytoplasm. The protein resides in the membrane. In terms of biological role, substrate of protein kinase PTK6. May play a regulatory role in the acute-phase response in systemic inflammation and may modulate STAT3 activity. This chain is Signal-transducing adaptor protein 2 (Stap2), found in Mus musculus (Mouse).